Here is a 510-residue protein sequence, read N- to C-terminus: UDP-N-acetylmuramoylalanine--D-glutamate ligase (510 aa).

An ATP-binding site is contributed by 138–144; that stretch reads GTNGKTT. Positions 294-316 are disordered; that stretch reads FDEPAPAPRRKKDAPPPTRAGGR.

This sequence belongs to the MurCDEF family.

It localises to the cytoplasm. The enzyme catalyses UDP-N-acetyl-alpha-D-muramoyl-L-alanine + D-glutamate + ATP = UDP-N-acetyl-alpha-D-muramoyl-L-alanyl-D-glutamate + ADP + phosphate + H(+). It participates in cell wall biogenesis; peptidoglycan biosynthesis. Cell wall formation. Catalyzes the addition of glutamate to the nucleotide precursor UDP-N-acetylmuramoyl-L-alanine (UMA). This Bordetella bronchiseptica (strain ATCC BAA-588 / NCTC 13252 / RB50) (Alcaligenes bronchisepticus) protein is UDP-N-acetylmuramoylalanine--D-glutamate ligase.